The primary structure comprises 79 residues: Small ribosomal subunit protein bS18 (79 aa).

Belongs to the bacterial ribosomal protein bS18 family. Part of the 30S ribosomal subunit. Forms a tight heterodimer with protein bS6.

In terms of biological role, binds as a heterodimer with protein bS6 to the central domain of the 16S rRNA, where it helps stabilize the platform of the 30S subunit. The chain is Small ribosomal subunit protein bS18 from Rhodopseudomonas palustris (strain BisB18).